The primary structure comprises 351 residues: SLAM family member 6 (351 aa).

Residues methionine 1 to serine 30 form the signal peptide. Residues glutamate 31–asparagine 239 lie on the Extracellular side of the membrane. The Ig-like V-type domain occupies serine 36–serine 130. Residues asparagine 82, asparagine 101, asparagine 112, asparagine 152, asparagine 159, asparagine 172, asparagine 186, asparagine 193, and asparagine 218 are each glycosylated (N-linked (GlcNAc...) asparagine). One can recognise an Ig-like C2-type domain in the interval asparagine 147–cysteine 210. 2 disulfides stabilise this stretch: cysteine 162–cysteine 229 and cysteine 168–cysteine 210. Residues alanine 240–isoleucine 262 traverse the membrane as a helical segment. Residues histidine 263–serine 351 lie on the Cytoplasmic side of the membrane. Residues proline 272–tyrosine 295 are disordered. 2 short sequence motifs (ITSM) span residues threonine 293 to valine 298 and threonine 317 to valine 322. Tyrosine 319 carries the post-translational modification Phosphotyrosine.

As to quaternary structure, homodimer. Interacts with PTN6 and, upon phosphorylation, with PTN11 and SH2D1A/SAP. Post-translationally, phosphorylated. In terms of tissue distribution, expressed on hematopoietic cells. Isoform 3 is expressed in thymocytes and B lymphocytes of C57Bl/6 strain.

Its subcellular location is the cell membrane. Self-ligand receptor of the signaling lymphocytic activation molecule (SLAM) family. SLAM receptors triggered by homo- or heterotypic cell-cell interactions are modulating the activation and differentiation of a wide variety of immune cells and thus are involved in the regulation and interconnection of both innate and adaptive immune response. Activities are controlled by presence or absence of small cytoplasmic adapter proteins, SH2D1A/SAP and/or SH2D1B/EAT-2. Triggers cytolytic activity only in natural killer cells (NK) expressing high surface densities of natural cytotoxicity receptors. Positive signaling in NK cells implicates phosphorylation of VAV1. NK cell activation seems to depend on SH2D1B and not on SH2D1A. In conjunction with SLAMF1 controls the transition between positive selection and the subsequent expansion and differentiation of the thymocytic natural killer T (NKT) cell lineage. Promotes T cell differentiation into a helper T-cell Th17 phenotype leading to increased IL-17 secretion; the costimulatory activity requires SH2D1A. Promotes recruitment of RORC to the IL-17 promoter. In conjunction with SLAMF1 and CD84/SLAMF5 may be a negative regulator of the humoral immune response. In the absence of SH2D1A/SAP can transmit negative signals to CD4(+) T-cells and NKT cells. Negatively regulates germinal center formation by inhibiting T-cell:B-cell adhesion; the function probably implicates increased association with PTPN6/SHP-1 via ITSMs in absence of SH2D1A/SAP. However, reported to mediated T-cell adhesion, to participate in stable T-cell:B-cell interactions and to be involved in maintaining B-cell tolerance in germinal centers and in preventing autoimmunity. Involved in regulation of autoimmunity. Isoform 3 may be suppressor of pathogenic T-cell proliferation. In Mus musculus (Mouse), this protein is SLAM family member 6 (Slamf6).